A 239-amino-acid polypeptide reads, in one-letter code: Metallo-beta-lactamase IND-1 (239 aa).

A signal peptide spans 1–20 (MKKSIRFFIVSILLSPFASA). Zn(2+) contacts are provided by His96, His98, Asp100, His159, and Cys178. Lys181 is a binding site for a beta-lactam. His220 contributes to the Zn(2+) binding site.

The protein belongs to the metallo-beta-lactamase superfamily. Class-B beta-lactamase family. In terms of assembly, monomer. It depends on Zn(2+) as a cofactor.

The protein localises to the periplasm. The enzyme catalyses a beta-lactam + H2O = a substituted beta-amino acid. With respect to regulation, inhibited by chelating agents such as EDTA. Not susceptible to inactivation by the beta-lactamase-blocking agent clavulanic acid. Functionally, class B beta-lactamase which confers resistance to the beta-lactam antibiotics, including penicillins, cephalosporins and carbapenems. Acts via hydrolysis of the beta-lactam ring. Has penicillin-, cephalosporin- and carbapenem-hydrolyzing activities. The chain is Metallo-beta-lactamase IND-1 from Chryseobacterium indologenes (Flavobacterium indologenes).